Here is a 356-residue protein sequence, read N- to C-terminus: Dihydroorotate dehydrogenase (quinone) (356 aa).

Residues 68-72 (AGFDK) and T92 each bind FMN. K72 contributes to the substrate binding site. Residue 117–121 (NRMGF) participates in substrate binding. FMN is bound by residues N145 and N178. Residue N178 coordinates substrate. S181 serves as the catalytic Nucleophile. N183 lines the substrate pocket. FMN-binding residues include K214 and T242. 243–244 (NT) is a binding site for substrate. FMN is bound by residues G266, G295, and 316 to 317 (YT).

It belongs to the dihydroorotate dehydrogenase family. Type 2 subfamily. Monomer. Requires FMN as cofactor.

The protein resides in the cell membrane. It catalyses the reaction (S)-dihydroorotate + a quinone = orotate + a quinol. The protein operates within pyrimidine metabolism; UMP biosynthesis via de novo pathway; orotate from (S)-dihydroorotate (quinone route): step 1/1. Functionally, catalyzes the conversion of dihydroorotate to orotate with quinone as electron acceptor. This is Dihydroorotate dehydrogenase (quinone) from Mycobacterium sp. (strain KMS).